Consider the following 275-residue polypeptide: Protein rolling stone (275 aa).

A run of 6 helical transmembrane segments spans residues 45-65 (LLYR…CVIV), 72-92 (FFIY…LISA), 127-147 (WLYN…WVFL), 162-182 (IITH…IAFP), 185-205 (ILHM…TLIY), and 232-252 (MVTF…LFGL).

As to expression, expressed in cells of the somatic mesoderm, most notably the muscle founder cells, between embryonic stages 12 and 14, in growing muscle fibers in dorsal, lateral and ventral positions. At stage 16 strongest expression is in some ventral muscles and muscle 8. At stages 16/17 expression is restricted to some cells of the CNS, the brain and the gonads.

The protein resides in the membrane. In terms of biological role, may have a central role in the fusion process during myogenesis, within the somatic mesoderm. The sequence is that of Protein rolling stone (rost) from Drosophila melanogaster (Fruit fly).